The primary structure comprises 196 residues: Carnitine operon protein CaiE (196 aa).

Positions 173–196 (TQPLRQMEENRPRLQGTTDVTPKR) are disordered. Polar residues predominate over residues 187–196 (QGTTDVTPKR).

This sequence belongs to the transferase hexapeptide repeat family.

It participates in amine and polyamine metabolism; carnitine metabolism. In terms of biological role, overproduction of CaiE stimulates the activity of CaiB and CaiD. This is Carnitine operon protein CaiE from Escherichia coli O6:K15:H31 (strain 536 / UPEC).